The chain runs to 473 residues: UDP-glycosyltransferase 71A27 (473 aa).

Residue histidine 15 is the Proton acceptor of the active site. Histidine 15 contacts an anthocyanidin. Aspartate 117 functions as the Charge relay in the catalytic mechanism. Residues alanine 345, glutamine 347, histidine 362, tryptophan 365, asparagine 366, serine 367, and glutamate 370 each contribute to the UDP-alpha-D-glucose site. Glycine 385 serves as a coordination point for an anthocyanidin. Residues glutamate 386 and glutamine 387 each coordinate UDP-alpha-D-glucose.

The protein belongs to the UDP-glycosyltransferase family.

It catalyses the reaction (20S)-protopanaxadiol + UDP-alpha-D-glucose = (20S)-ginsenoside C-K + UDP + H(+). It participates in secondary metabolite biosynthesis; terpenoid biosynthesis. In terms of biological role, component of the triterpene saponins (e.g. PPD-type ginsenosides or panaxosides) biosynthetic pathways. Glycosyltransferase that catalyzes the biosynthesis of compound K from protopanaxadiol (PPD). The sequence is that of UDP-glycosyltransferase 71A27 from Panax ginseng (Korean ginseng).